A 169-amino-acid polypeptide reads, in one-letter code: Phycobiliprotein beta chain (169 aa).

N72 carries the post-translational modification N4-methylasparagine. C82 contacts (2R,3E)-phycocyanobilin.

This sequence belongs to the phycobiliprotein family. As to quaternary structure, heterodimer of an alpha and a beta chain. Post-translationally, contains one covalently linked bilin chromophore.

The protein localises to the cellular thylakoid membrane. Its function is as follows. Light-harvesting photosynthetic bile pigment-protein from the phycobiliprotein complex. This is a protein functionally equivalent to, but with weaker absorbance than, allophycocyanin beta chain. In Mastigocladus laminosus (Fischerella sp.), this protein is Phycobiliprotein beta chain (apcD).